Reading from the N-terminus, the 251-residue chain is FHA domain-containing protein FHA1 (251 aa).

Positions 32-89 (IILGRNSKKSTVDVDLSSLGGGMNISRNHARIFYDFTRRRFSLEVLGKNGCFVEGVLH) constitute an FHA domain. Over residues 163-174 (EYDDEDDDEEED) the composition is skewed to acidic residues. Positions 163–209 (EYDDEDDDEEEDIRGSGKKTWRDGHEGVYASGEKKREGRSKADREAD) are disordered. The segment covering 182 to 206 (TWRDGHEGVYASGEKKREGRSKADR) has biased composition (basic and acidic residues).

As to expression, expressed in roots and vascular tissues near the shoot apex in young seedlings.

The protein resides in the nucleus. Functionally, may play a role in the control of plant organ development. Does not show transactivation activity in yeast. The sequence is that of FHA domain-containing protein FHA1 from Arabidopsis thaliana (Mouse-ear cress).